A 265-amino-acid polypeptide reads, in one-letter code: Endochitinase At2g43580 (265 aa).

The signal sequence occupies residues 1 to 24; sequence MALTKIFLILLLSLLGLYSETVKS. One can recognise a Chitin-binding type-1 domain in the interval 25-59; that stretch reads QNCDCAPNLCCSQFGYCGTTADYCGSTCQSGPCRV. Cystine bridges form between C27-C35, C29-C41, C34-C48, and C52-C57. The interval 67–265 is catalytic; the sequence is GLVGNIVTQI…GLDPGANITC (199 aa). A glycan (N-linked (GlcNAc...) asparagine) is linked at N102. The active-site Proton donor is the E129. N262 is a glycosylation site (N-linked (GlcNAc...) asparagine).

It belongs to the glycosyl hydrolase 19 family. Chitinase class I subfamily.

It carries out the reaction Random endo-hydrolysis of N-acetyl-beta-D-glucosaminide (1-&gt;4)-beta-linkages in chitin and chitodextrins.. This is Endochitinase At2g43580 from Arabidopsis thaliana (Mouse-ear cress).